The primary structure comprises 412 residues: Ribosomal RNA large subunit methyltransferase G (412 aa).

The disordered stretch occupies residues 386-412 (KAEPHENGESSSDTPNPQSSLYGGVKR). Residues 394–406 (ESSSDTPNPQSSL) are compositionally biased toward polar residues.

The protein belongs to the methyltransferase superfamily. RlmG family.

The protein resides in the cytoplasm. The catalysed reaction is guanosine(1835) in 23S rRNA + S-adenosyl-L-methionine = N(2)-methylguanosine(1835) in 23S rRNA + S-adenosyl-L-homocysteine + H(+). Its function is as follows. Specifically methylates the guanine in position 1835 (m2G1835) of 23S rRNA. The polypeptide is Ribosomal RNA large subunit methyltransferase G (Shewanella sediminis (strain HAW-EB3)).